Here is a 153-residue protein sequence, read N- to C-terminus: Large ribosomal subunit protein uL22 (153 aa).

This sequence belongs to the universal ribosomal protein uL22 family. As to quaternary structure, part of the 50S ribosomal subunit.

Its function is as follows. This protein binds specifically to 23S rRNA. It makes multiple contacts with different domains of the 23S rRNA in the assembled 50S subunit and ribosome. The globular domain of the protein is located near the polypeptide exit tunnel on the outside of the subunit, while an extended beta-hairpin is found that lines the wall of the exit tunnel in the center of the 70S ribosome. The polypeptide is Large ribosomal subunit protein uL22 (Methanococcus maripaludis (strain C5 / ATCC BAA-1333)).